A 1113-amino-acid chain; its full sequence is Carbamoyl phosphate synthase large chain (1113 aa).

The segment at 1-407 (MPKRSDINHV…ALNKALRSLE (407 aa)) is carboxyphosphate synthetic domain. ATP contacts are provided by arginine 134, arginine 174, glycine 180, glycine 181, glutamate 213, isoleucine 215, glutamate 220, glycine 246, valine 247, histidine 248, glutamine 290, and glutamate 304. Residues 138–333 (KDIVTTIGGE…IAKMAAKLAI (196 aa)) enclose the ATP-grasp 1 domain. Glutamine 290, glutamate 304, and asparagine 306 together coordinate Mg(2+). Mn(2+) contacts are provided by glutamine 290, glutamate 304, and asparagine 306. Positions 408 to 565 (TKQQGFWTKP…ELDPAAESEV (158 aa)) are oligomerization domain. Residues 566–967 (APQTEREKVL…AYAKAEAGAF (402 aa)) form a carbamoyl phosphate synthetic domain region. Residues 695–886 (GALLNREQLP…LAKAASRIAV (192 aa)) enclose the ATP-grasp 2 domain. ATP is bound by residues arginine 731, arginine 770, leucine 772, glutamate 777, glycine 802, isoleucine 803, histidine 804, serine 805, glutamine 845, and glutamate 857. The Mg(2+) site is built by glutamine 845, glutamate 857, and asparagine 859. Residues glutamine 845, glutamate 857, and asparagine 859 each coordinate Mn(2+). One can recognise an MGS-like domain in the interval 968-1113 (GALPTEGTVF…LQELDHAVKA (146 aa)). The segment at 968–1113 (GALPTEGTVF…LQELDHAVKA (146 aa)) is allosteric domain.

The protein belongs to the CarB family. In terms of assembly, composed of two chains; the small (or glutamine) chain promotes the hydrolysis of glutamine to ammonia, which is used by the large (or ammonia) chain to synthesize carbamoyl phosphate. Tetramer of heterodimers (alpha,beta)4. Mg(2+) is required as a cofactor. Mn(2+) serves as cofactor.

The catalysed reaction is hydrogencarbonate + L-glutamine + 2 ATP + H2O = carbamoyl phosphate + L-glutamate + 2 ADP + phosphate + 2 H(+). It carries out the reaction hydrogencarbonate + NH4(+) + 2 ATP = carbamoyl phosphate + 2 ADP + phosphate + 2 H(+). Its pathway is amino-acid biosynthesis; L-arginine biosynthesis; carbamoyl phosphate from bicarbonate: step 1/1. It functions in the pathway pyrimidine metabolism; UMP biosynthesis via de novo pathway; (S)-dihydroorotate from bicarbonate: step 1/3. Large subunit of the glutamine-dependent carbamoyl phosphate synthetase (CPSase). CPSase catalyzes the formation of carbamoyl phosphate from the ammonia moiety of glutamine, carbonate, and phosphate donated by ATP, constituting the first step of 2 biosynthetic pathways, one leading to arginine and/or urea and the other to pyrimidine nucleotides. The large subunit (synthetase) binds the substrates ammonia (free or transferred from glutamine from the small subunit), hydrogencarbonate and ATP and carries out an ATP-coupled ligase reaction, activating hydrogencarbonate by forming carboxy phosphate which reacts with ammonia to form carbamoyl phosphate. The sequence is that of Carbamoyl phosphate synthase large chain from Corynebacterium glutamicum (strain ATCC 13032 / DSM 20300 / JCM 1318 / BCRC 11384 / CCUG 27702 / LMG 3730 / NBRC 12168 / NCIMB 10025 / NRRL B-2784 / 534).